Consider the following 127-residue polypeptide: Nuclear transport factor 2 (127 aa).

Lysine 4 carries the post-translational modification N6-acetyllysine. Residues 10–121 (IGSSFIQHYY…WVCTNDMFRL (112 aa)) form the NTF2 domain.

Homodimer. Interacts with RAN (GDP-bound form); the interaction is direct and regulates RAN nuclear import. Interacts with the nucleoporins NUP54, NUP58 and NUP62 (via FG repeats); recruits NUTF2 to the nuclear pore complex a step required for NUTF2-mediated GDP-bound RAN nuclear import. Interacts with CAPG; mediates its nuclear import.

Its subcellular location is the cytoplasm. It localises to the cytosol. The protein localises to the nucleus outer membrane. The protein resides in the nucleus. It is found in the nuclear pore complex. Its subcellular location is the nucleus inner membrane. It localises to the nucleoplasm. Its function is as follows. Mediates the import of GDP-bound RAN from the cytoplasm into the nucleus which is essential for the function of RAN in cargo receptor-mediated nucleocytoplasmic transport. Thereby, plays indirectly a more general role in cargo receptor-mediated nucleocytoplasmic transport. Interacts with GDP-bound RAN in the cytosol, recruits it to the nuclear pore complex via its interaction with nucleoporins and promotes its nuclear import. The polypeptide is Nuclear transport factor 2 (Bos taurus (Bovine)).